A 473-amino-acid chain; its full sequence is MHANVYIPEEFLTHIESIMPSHLDMASFVASCQKPLRKSIRVNTLKISVEDFLVRAKEKGWELEPVPWCETGFWITADESEAPLGNTAEHMSGLFYIQEASSMMPPSALFQGEADYQAVLDTAAAPGSKTTQIAALMNNRGVLVANEYAASRVKVLHANIERCGVRNAALSNFDGRVFGGWLPEQFDAVLLDAPCSGEGTIRKDADAMKNWTYQSVVDIADTQKDLIESAFHALKPNGVLVYSTCTLSTEENQQVCHHLKETFGDAVEFESLESLFDNAKATTTEEGFLHIFPQVYDSEGFFVARIRKLASVTPPEVKKRLGKFPFEKASKKAQQEVAEQLLGALDIELPSDTQVWIRDKDVWLFPEALEPMIGEFRFSRMGIKIAETHKKGYRWQHQVATTLATGNEANIVDLSIEDAREWFMGRDVRPEGLSGEGEVLVKYNGAIIGLGKWVGNRVKNGLPRELVRDKNLF.

Residues 123-129 (AAAPGSK), Glu147, Asp174, and Asp192 contribute to the S-adenosyl-L-methionine site. Residue Cys245 is the Nucleophile of the active site.

Belongs to the class I-like SAM-binding methyltransferase superfamily. RsmB/NOP family.

The protein localises to the cytoplasm. The catalysed reaction is cytidine(1407) in 16S rRNA + S-adenosyl-L-methionine = 5-methylcytidine(1407) in 16S rRNA + S-adenosyl-L-homocysteine + H(+). Functionally, specifically methylates the cytosine at position 1407 (m5C1407) of 16S rRNA. This is Ribosomal RNA small subunit methyltransferase F from Vibrio atlanticus (strain LGP32) (Vibrio splendidus (strain Mel32)).